The following is a 217-amino-acid chain: Methylthioribulose-1-phosphate dehydratase (217 aa).

His-106 and His-108 together coordinate Zn(2+).

This sequence belongs to the aldolase class II family. MtnB subfamily. It depends on Zn(2+) as a cofactor.

It catalyses the reaction 5-(methylsulfanyl)-D-ribulose 1-phosphate = 5-methylsulfanyl-2,3-dioxopentyl phosphate + H2O. It participates in amino-acid biosynthesis; L-methionine biosynthesis via salvage pathway; L-methionine from S-methyl-5-thio-alpha-D-ribose 1-phosphate: step 2/6. Catalyzes the dehydration of methylthioribulose-1-phosphate (MTRu-1-P) into 2,3-diketo-5-methylthiopentyl-1-phosphate (DK-MTP-1-P). The protein is Methylthioribulose-1-phosphate dehydratase of Xanthomonas euvesicatoria pv. vesicatoria (strain 85-10) (Xanthomonas campestris pv. vesicatoria).